We begin with the raw amino-acid sequence, 102 residues long: MGVTLEGQRKESIWVLMRRQRARRALVKKIMIRPRKSVEASRRPCRAIHRRVKTLKELVPNTKTSEGLDGLFRQTADYILALEMKVKVMQTMVQVLTETNCV.

The bHLH domain occupies 32–82; that stretch reads IRPRKSVEASRRPCRAIHRRVKTLKELVPNTKTSEGLDGLFRQTADYILAL.

Homodimer. As to expression, expressed in the root vascular tissue and in root hairs and lateral root caps. Detected at the protein level in all cell files in the elongation zone.

The protein localises to the nucleus. Functionally, transcription factor that modulates the balance between cellular proliferation and differentiation in root growth. Does not act through cytokinin and auxin signaling, but by repressing peroxidase expression in the elongation zone. This is Transcription factor UPBEAT1 (UPB1) from Arabidopsis thaliana (Mouse-ear cress).